The following is a 323-amino-acid chain: Acetyl-coenzyme A carboxylase carboxyl transferase subunit alpha (323 aa).

A CoA carboxyltransferase C-terminal domain is found at 39 to 293 (RLAGKSQQLT…KRSLAESLRQ (255 aa)).

It belongs to the AccA family. In terms of assembly, acetyl-CoA carboxylase is a heterohexamer composed of biotin carboxyl carrier protein (AccB), biotin carboxylase (AccC) and two subunits each of ACCase subunit alpha (AccA) and ACCase subunit beta (AccD).

It localises to the cytoplasm. The enzyme catalyses N(6)-carboxybiotinyl-L-lysyl-[protein] + acetyl-CoA = N(6)-biotinyl-L-lysyl-[protein] + malonyl-CoA. It functions in the pathway lipid metabolism; malonyl-CoA biosynthesis; malonyl-CoA from acetyl-CoA: step 1/1. Its function is as follows. Component of the acetyl coenzyme A carboxylase (ACC) complex. First, biotin carboxylase catalyzes the carboxylation of biotin on its carrier protein (BCCP) and then the CO(2) group is transferred by the carboxyltransferase to acetyl-CoA to form malonyl-CoA. This Cupriavidus pinatubonensis (strain JMP 134 / LMG 1197) (Cupriavidus necator (strain JMP 134)) protein is Acetyl-coenzyme A carboxylase carboxyl transferase subunit alpha.